The chain runs to 624 residues: MKGQETRGFQSEVKQLLHLMIHSLYSNKEIFLRELISNASDAADKLRFRALSNPDLYEGDGELRVRVSFDKDKRTLTIADNGVGMNRDDVIDHLGTIAKSGTKSFLESMGSDQAKDSQLIGQFGVGFYSAFIVADKVTVRTRAAGDKPENGVFWESAGEGEYTVADITKDDRGTEITLHLREGEDEFLDDWRVRSIISKYSDHIALPVEIEKQEEKDGETIVSWEKINKAQALWTRNKSEIKDDEYNEFYKHIAHDFTDPLTWSHNRVEGKQEYTSLLYIPSQAPWDMWNRDHKHGLKLYVQRVFIMDDAEQFMPNYLRFVRGLIDSNDLPLNVSREILQDSTVTRNLRSALTKRVLQMLEKLAKDDAEKYQTFWKQFGLVLKEGPAEDHANQEAIAKLMRFASTHTDSSAQTVSLEDYISRMKEGQEKIYYITADSYAAAKSSPHLELLRKKGIEVLLLSDRIDEWMMNYLTEFDGKAFQSVSKVDESLEKLADEVDESAKEAEKALTPFVERVKTLLGDRVKEVRLTHRLTDTPAIVTTDADEMSTQMAKLFAAAGQAVPEVKYIFELNPDHVLVKRTADTQDEAQFNEWVELLLDQALFAERGTLEDPNQFIRRMNQLLVS.

Residues 1-336 are a; substrate-binding; that stretch reads MKGQETRGFQ…SNDLPLNVSR (336 aa). Residues 337 to 552 form a b region; it reads EILQDSTVTR…ADEMSTQMAK (216 aa). The tract at residues 553–624 is c; sequence LFAAAGQAVP…IRRMNQLLVS (72 aa).

The protein belongs to the heat shock protein 90 family. In terms of assembly, homodimer.

Its subcellular location is the cytoplasm. Its function is as follows. Molecular chaperone. Has ATPase activity. The chain is Chaperone protein HtpG from Citrobacter koseri (strain ATCC BAA-895 / CDC 4225-83 / SGSC4696).